A 261-amino-acid chain; its full sequence is MIIADNIKQFHSIRNSLIKQQKIGFVPTMGALHNGHISLIKKAKSENDVVIVSIFVNPTQFNNPNDYQTYPNQLQQDIQILASLDVDVLFNPSEKDIYPDGNLLRIEPKLEIANILEGKSRPGHFSGMLTVILKLLQITKPNNLYLGEKDYQQVMLIKQLVKDFFINTKIIVCPTQRQPSGLPLSSRNKNLTSTDIEIANKIYEILRQDNFSNLEELTNKINSTGAKLQYIQKLNNRIFLAFYIGKVRLIDNFLKETGPSC.

Residue 29-36 (MGALHNGH) coordinates ATP. His-36 acts as the Proton donor in catalysis. Gln-60 contacts (R)-pantoate. Gln-60 contacts beta-alanine. ATP is bound at residue 147–150 (GEKD). Gln-153 is a binding site for (R)-pantoate. 184 to 187 (LSSR) provides a ligand contact to ATP.

This sequence belongs to the pantothenate synthetase family. Homodimer.

The protein localises to the cytoplasm. The enzyme catalyses (R)-pantoate + beta-alanine + ATP = (R)-pantothenate + AMP + diphosphate + H(+). Its pathway is cofactor biosynthesis; (R)-pantothenate biosynthesis; (R)-pantothenate from (R)-pantoate and beta-alanine: step 1/1. Its function is as follows. Catalyzes the condensation of pantoate with beta-alanine in an ATP-dependent reaction via a pantoyl-adenylate intermediate. The protein is Pantothenate synthetase of Francisella tularensis subsp. mediasiatica (strain FSC147).